The chain runs to 126 residues: Protein HEAT-INDUCED TAS1 TARGET 3 (126 aa).

The protein belongs to the heat induced plant HTT protein family. Expressed in seedlings, leaves, stems, inflorescences and siliques.

The protein resides in the cytoplasm. Its subcellular location is the nucleus. Functionally, mediates both basal and acquired thermotolerance. The protein is Protein HEAT-INDUCED TAS1 TARGET 3 of Arabidopsis thaliana (Mouse-ear cress).